Consider the following 245-residue polypeptide: uncharacterized protein (245 aa).

It to M.tuberculosis Rv2927c.

This is an uncharacterized protein from Mycobacterium leprae (strain TN).